The following is a 187-amino-acid chain: Frequenin-1 (187 aa).

Residue glycine 2 is the site of N-myristoyl glycine attachment. 4 consecutive EF-hand domains span residues 24 to 59 (EKEI…FPQG), 60 to 95 (DPSK…TSKG), 96 to 131 (NLDE…IYQM), and 143 to 178 (TPQK…DPRI). 15 residues coordinate Ca(2+): aspartate 73, asparagine 75, aspartate 77, serine 79, glutamate 84, aspartate 109, aspartate 111, aspartate 113, tyrosine 115, glutamate 120, aspartate 156, asparagine 158, aspartate 160, lysine 162, and glutamate 167.

The protein belongs to the recoverin family. In terms of assembly, in contrast to Frq2, does not interact with ric8a. In terms of tissue distribution, enriched in synapses, such as the motor nerve endings at neuromuscular junctions. In the embryo, highly expressed in the ventral ganglia.

The protein resides in the cytoplasm. In terms of biological role, ca(2+)-dependent modulation of synaptic efficacy. Also plays a role in axon terminal morphology. This is Frequenin-1 (Frq1) from Drosophila melanogaster (Fruit fly).